We begin with the raw amino-acid sequence, 569 residues long: Arginine--tRNA ligase (569 aa).

The short motif at 123 to 133 (PNIAKRMHIGH) is the 'HIGH' region element.

The protein belongs to the class-I aminoacyl-tRNA synthetase family. As to quaternary structure, monomer.

It is found in the cytoplasm. The catalysed reaction is tRNA(Arg) + L-arginine + ATP = L-arginyl-tRNA(Arg) + AMP + diphosphate. This is Arginine--tRNA ligase from Fusobacterium nucleatum subsp. nucleatum (strain ATCC 25586 / DSM 15643 / BCRC 10681 / CIP 101130 / JCM 8532 / KCTC 2640 / LMG 13131 / VPI 4355).